The sequence spans 231 residues: LexA repressor (231 aa).

Residues 26–46 (FDEMKDALDLRSKSGIHRLIT) constitute a DNA-binding region (H-T-H motif). Catalysis depends on for autocatalytic cleavage activity residues Ser-152 and Lys-190.

The protein belongs to the peptidase S24 family. Homodimer.

The catalysed reaction is Hydrolysis of Ala-|-Gly bond in repressor LexA.. Functionally, represses a number of genes involved in the response to DNA damage (SOS response), including recA and lexA. In the presence of single-stranded DNA, RecA interacts with LexA causing an autocatalytic cleavage which disrupts the DNA-binding part of LexA, leading to derepression of the SOS regulon and eventually DNA repair. This chain is LexA repressor, found in Bradyrhizobium diazoefficiens (strain JCM 10833 / BCRC 13528 / IAM 13628 / NBRC 14792 / USDA 110).